The chain runs to 403 residues: GPI mannosyltransferase 1 (403 aa).

Over 1-4 (MTGE) the chain is Cytoplasmic. A helical membrane pass occupies residues 5 to 25 (EWGLTVLSFLVRVGFFLFGIY). The Lumenal portion of the chain corresponds to 26–78 (QDANFKVRYTDIDYFVFHDAAKYVYEGKSPYARDTYRYTPLLSWLLVPNHYFG). A helical transmembrane segment spans residues 79–99 (WFHLGKVIFVIFDLVTGLIIM). Over 100-110 (KLLNQAISRKR) the chain is Cytoplasmic. A helical transmembrane segment spans residues 111 to 131 (ALILESIWLLNPMVITISTRG). A topological domain (lumenal) is located at residue Asn-132. A helical transmembrane segment spans residues 133 to 149 (AESVLCCLIMFTLFFLQ). Residues 150-160 (KSRYTLAGILY) are Cytoplasmic-facing. Residues 161-181 (GLSIHFKIYPIIYCIPIAIFI) form a helical membrane-spanning segment. Residues 182-193 (YYNKRNQGPRTQ) are Lumenal-facing. A helical membrane pass occupies residues 194–214 (LTSLLNIGLSTLTTLLGCGWA). Over 215–266 (MYKIYGYEFLDQAYLYHLYRTDHRHNFSVWNMLLYLDSANKENGESNLSRYA) the chain is Cytoplasmic. Residues 267–287 (FVPQLLLVLVTGCLEWWNPTF) form a helical membrane-spanning segment. Residues 288–310 (DNLLRVLFVQTFAFVTYNKVCTS) are Lumenal-facing. The helical transmembrane segment at 311–331 (QYFVWYLIFLPFYLSRTHIGW) threads the bilayer. The Cytoplasmic segment spans residues 332 to 334 (KKG). The helical transmembrane segment at 335-355 (LLMATLWVGTQGIWLSQGYYL) threads the bilayer. Residues 356–361 (EFEGKN) lie on the Lumenal side of the membrane. A helical transmembrane segment spans residues 362 to 382 (VFYPGLFIASVLFFVTNVWLL). Over 383 to 403 (GQFITDIKIPTQPTVSNKKNN) the chain is Cytoplasmic.

This sequence belongs to the PIGM family.

The protein localises to the endoplasmic reticulum membrane. It functions in the pathway glycolipid biosynthesis; glycosylphosphatidylinositol-anchor biosynthesis. Mannosyltransferase involved in glycosylphosphatidylinositol-anchor biosynthesis. Transfers the first alpha-1,4-mannose to GlcN-acyl-PI during GPI precursor assembly. Required for cell wall integrity. In Saccharomyces cerevisiae (strain ATCC 204508 / S288c) (Baker's yeast), this protein is GPI mannosyltransferase 1 (GPI14).